We begin with the raw amino-acid sequence, 265 residues long: Hydroxyethylthiazole kinase (265 aa).

Met50 is a substrate binding site. The ATP site is built by Arg125 and Thr171. Position 198 (Gly198) interacts with substrate.

Belongs to the Thz kinase family. Mg(2+) serves as cofactor.

The catalysed reaction is 5-(2-hydroxyethyl)-4-methylthiazole + ATP = 4-methyl-5-(2-phosphooxyethyl)-thiazole + ADP + H(+). It functions in the pathway cofactor biosynthesis; thiamine diphosphate biosynthesis; 4-methyl-5-(2-phosphoethyl)-thiazole from 5-(2-hydroxyethyl)-4-methylthiazole: step 1/1. Functionally, catalyzes the phosphorylation of the hydroxyl group of 4-methyl-5-beta-hydroxyethylthiazole (THZ). In Salmonella agona (strain SL483), this protein is Hydroxyethylthiazole kinase.